Consider the following 246-residue polypeptide: Ribonuclease 3 (246 aa).

Residues 18–147 (FQELQKKIGI…FIGALYLDQG (130 aa)) form the RNase III domain. E60 contributes to the Mg(2+) binding site. Residue D64 is part of the active site. Mg(2+) contacts are provided by D133 and E136. E136 is a catalytic residue. Residues 173 to 242 (DFKSQLQELV…AQMALETLRA (70 aa)) form the DRBM domain.

It belongs to the ribonuclease III family. As to quaternary structure, homodimer. Mg(2+) is required as a cofactor.

The protein resides in the cytoplasm. The enzyme catalyses Endonucleolytic cleavage to 5'-phosphomonoester.. Functionally, digests double-stranded RNA. Involved in the processing of primary rRNA transcript to yield the immediate precursors to the large and small rRNAs (23S and 16S). Processes some mRNAs, and tRNAs when they are encoded in the rRNA operon. Processes pre-crRNA and tracrRNA of type II CRISPR loci if present in the organism. This is Ribonuclease 3 from Geobacillus thermodenitrificans (strain NG80-2).